The sequence spans 84 residues: Hepcidin (84 aa).

Positions 1-24 are cleaved as a signal peptide; sequence MALSSQIWAACLLLLLLLASLTSG. Residues 25–54 constitute a propeptide that is removed on maturation; that stretch reads SVFPQQTGQLAELQPQDRAGARASWMPMFQ. Cystine bridges form between C66/C82, C69/C72, C70/C78, and C73/C81.

The protein belongs to the hepcidin family. Interacts with SLC40A1; this interaction promotes SLC40A1 rapid ubiquitination. Highest expression in liver and to a lesser extent in heart and brain. Low levels in lung, tonsils, salivary gland, trachea, prostate gland, adrenal gland and thyroid gland. Secreted into the urine and blood. Expressed by hepatocytes.

Its subcellular location is the secreted. Its function is as follows. Liver-produced hormone that constitutes the main circulating regulator of iron absorption and distribution across tissues. Acts by promoting endocytosis and degradation of ferroportin/SLC40A1, leading to the retention of iron in iron-exporting cells and decreased flow of iron into plasma. Controls the major flows of iron into plasma: absorption of dietary iron in the intestine, recycling of iron by macrophages, which phagocytose old erythrocytes and other cells, and mobilization of stored iron from hepatocytes. In terms of biological role, has strong antimicrobial activity against E.coli ML35P N.cinerea and weaker against S.epidermidis, S.aureus and group b streptococcus bacteria. Active against the fungus C.albicans. No activity against P.aeruginosa. This is Hepcidin from Homo sapiens (Human).